The chain runs to 272 residues: Indole-3-glycerol phosphate synthase (272 aa).

This sequence belongs to the TrpC family.

The enzyme catalyses 1-(2-carboxyphenylamino)-1-deoxy-D-ribulose 5-phosphate + H(+) = (1S,2R)-1-C-(indol-3-yl)glycerol 3-phosphate + CO2 + H2O. It functions in the pathway amino-acid biosynthesis; L-tryptophan biosynthesis; L-tryptophan from chorismate: step 4/5. The polypeptide is Indole-3-glycerol phosphate synthase (Mycobacteroides abscessus (strain ATCC 19977 / DSM 44196 / CCUG 20993 / CIP 104536 / JCM 13569 / NCTC 13031 / TMC 1543 / L948) (Mycobacterium abscessus)).